A 299-amino-acid polypeptide reads, in one-letter code: Ribosomal RNA small subunit methyltransferase H (299 aa).

S-adenosyl-L-methionine contacts are provided by residues 36–38, D55, F82, D97, and Q104; that span reads GGH.

The protein belongs to the methyltransferase superfamily. RsmH family.

It localises to the cytoplasm. The enzyme catalyses cytidine(1402) in 16S rRNA + S-adenosyl-L-methionine = N(4)-methylcytidine(1402) in 16S rRNA + S-adenosyl-L-homocysteine + H(+). Specifically methylates the N4 position of cytidine in position 1402 (C1402) of 16S rRNA. This Synechococcus sp. (strain RCC307) protein is Ribosomal RNA small subunit methyltransferase H.